A 294-amino-acid polypeptide reads, in one-letter code: 1D-myo-inositol 2-acetamido-2-deoxy-alpha-D-glucopyranoside deacetylase (294 aa).

3 residues coordinate Zn(2+): histidine 14, aspartate 17, and histidine 149.

This sequence belongs to the MshB deacetylase family. The cofactor is Zn(2+).

The enzyme catalyses 1D-myo-inositol 2-acetamido-2-deoxy-alpha-D-glucopyranoside + H2O = 1D-myo-inositol 2-amino-2-deoxy-alpha-D-glucopyranoside + acetate. Its function is as follows. Catalyzes the deacetylation of 1D-myo-inositol 2-acetamido-2-deoxy-alpha-D-glucopyranoside (GlcNAc-Ins) in the mycothiol biosynthesis pathway. The polypeptide is 1D-myo-inositol 2-acetamido-2-deoxy-alpha-D-glucopyranoside deacetylase (Rhodococcus erythropolis (strain PR4 / NBRC 100887)).